A 148-amino-acid polypeptide reads, in one-letter code: 3-dehydroquinate dehydratase (148 aa).

Residue tyrosine 23 is the Proton acceptor of the active site. Residues asparagine 75, histidine 81, and aspartate 88 each contribute to the substrate site. The Proton donor role is filled by histidine 101. Substrate-binding positions include 102–103 (LS) and arginine 112.

It belongs to the type-II 3-dehydroquinase family. In terms of assembly, homododecamer.

It carries out the reaction 3-dehydroquinate = 3-dehydroshikimate + H2O. It functions in the pathway metabolic intermediate biosynthesis; chorismate biosynthesis; chorismate from D-erythrose 4-phosphate and phosphoenolpyruvate: step 3/7. In terms of biological role, catalyzes a trans-dehydration via an enolate intermediate. This chain is 3-dehydroquinate dehydratase, found in Cellvibrio japonicus (strain Ueda107) (Pseudomonas fluorescens subsp. cellulosa).